A 281-amino-acid chain; its full sequence is Glutamate racemase (281 aa).

Substrate contacts are provided by residues Asp-10–Ser-11 and Tyr-42–Gly-43. Cys-74 (proton donor/acceptor) is an active-site residue. Asn-75–Thr-76 contributes to the substrate binding site. The active-site Proton donor/acceptor is the Cys-190. Residue Thr-191–His-192 participates in substrate binding.

It belongs to the aspartate/glutamate racemases family.

The catalysed reaction is L-glutamate = D-glutamate. It functions in the pathway cell wall biogenesis; peptidoglycan biosynthesis. Functionally, provides the (R)-glutamate required for cell wall biosynthesis. This is Glutamate racemase from Oenococcus oeni (strain ATCC BAA-331 / PSU-1).